The sequence spans 151 residues: Ribosome maturation factor RimP (151 aa).

The protein belongs to the RimP family.

The protein localises to the cytoplasm. Its function is as follows. Required for maturation of 30S ribosomal subunits. The protein is Ribosome maturation factor RimP of Shewanella woodyi (strain ATCC 51908 / MS32).